Consider the following 227-residue polypeptide: ATP-dependent Clp protease proteolytic subunit 1 (227 aa).

Ser-124 acts as the Nucleophile in catalysis. His-149 is a catalytic residue.

The protein belongs to the peptidase S14 family. Fourteen ClpP subunits assemble into 2 heptameric rings which stack back to back to give a disk-like structure with a central cavity, resembling the structure of eukaryotic proteasomes.

The protein resides in the cytoplasm. The enzyme catalyses Hydrolysis of proteins to small peptides in the presence of ATP and magnesium. alpha-casein is the usual test substrate. In the absence of ATP, only oligopeptides shorter than five residues are hydrolyzed (such as succinyl-Leu-Tyr-|-NHMec, and Leu-Tyr-Leu-|-Tyr-Trp, in which cleavage of the -Tyr-|-Leu- and -Tyr-|-Trp bonds also occurs).. Functionally, cleaves peptides in various proteins in a process that requires ATP hydrolysis. Has a chymotrypsin-like activity. Plays a major role in the degradation of misfolded proteins. The chain is ATP-dependent Clp protease proteolytic subunit 1 from Rhodopirellula baltica (strain DSM 10527 / NCIMB 13988 / SH1).